Consider the following 474-residue polypeptide: Glutamate--tRNA ligase (474 aa).

The short motif at 10-20 (PSPTGYLHIGG) is the 'HIGH' region element. 4 residues coordinate Zn(2+): Cys107, Cys109, Cys134, and Asp136. The short motif at 244 to 248 (RLSKR) is the 'KMSKS' region element. An ATP-binding site is contributed by Lys247.

Belongs to the class-I aminoacyl-tRNA synthetase family. Glutamate--tRNA ligase type 1 subfamily. Monomer. Requires Zn(2+) as cofactor.

Its subcellular location is the cytoplasm. It carries out the reaction tRNA(Glu) + L-glutamate + ATP = L-glutamyl-tRNA(Glu) + AMP + diphosphate. Catalyzes the attachment of glutamate to tRNA(Glu) in a two-step reaction: glutamate is first activated by ATP to form Glu-AMP and then transferred to the acceptor end of tRNA(Glu). This is Glutamate--tRNA ligase from Anaeromyxobacter sp. (strain K).